The following is a 154-amino-acid chain: 6,7-dimethyl-8-ribityllumazine synthase (154 aa).

5-amino-6-(D-ribitylamino)uracil is bound by residues Phe23, 57–59, and 81–83; these read AFE and AVI. (2S)-2-hydroxy-3-oxobutyl phosphate is bound at residue 86–87; sequence ST. His89 functions as the Proton donor in the catalytic mechanism. Position 114 (Phe114) interacts with 5-amino-6-(D-ribitylamino)uracil. Arg128 is a (2S)-2-hydroxy-3-oxobutyl phosphate binding site.

This sequence belongs to the DMRL synthase family.

The catalysed reaction is (2S)-2-hydroxy-3-oxobutyl phosphate + 5-amino-6-(D-ribitylamino)uracil = 6,7-dimethyl-8-(1-D-ribityl)lumazine + phosphate + 2 H2O + H(+). It participates in cofactor biosynthesis; riboflavin biosynthesis; riboflavin from 2-hydroxy-3-oxobutyl phosphate and 5-amino-6-(D-ribitylamino)uracil: step 1/2. Its function is as follows. Catalyzes the formation of 6,7-dimethyl-8-ribityllumazine by condensation of 5-amino-6-(D-ribitylamino)uracil with 3,4-dihydroxy-2-butanone 4-phosphate. This is the penultimate step in the biosynthesis of riboflavin. This is 6,7-dimethyl-8-ribityllumazine synthase from Campylobacter jejuni subsp. jejuni serotype O:2 (strain ATCC 700819 / NCTC 11168).